The following is a 475-amino-acid chain: Trifunctional enzyme subunit beta, mitochondrial (475 aa).

Residues 1 to 34 constitute a mitochondrion transit peptide; sequence MTTILTSTFRNLSTTSKWALRSSIRPLSCSSQLH. An N6-succinyllysine modification is found at lysine 53. Lysine 73 is modified (N6-acetyllysine; alternate). Lysine 73 bears the N6-succinyllysine; alternate mark. Cysteine 139 acts as the Acyl-thioester intermediate in catalysis. An intramembrane segment occupies 174-221; it reads IRHSRNMRKMMLDLNKAKTLGQRLSLLSKFRLNFLSPELPAVAEFSTN. The residue at position 189 (lysine 189) is an N6-acetyllysine; alternate. Lysine 189 bears the N6-succinyllysine; alternate mark. Lysine 191, lysine 273, and lysine 292 each carry N6-succinyllysine. Residue lysine 294 is modified to N6-acetyllysine; alternate. Residue lysine 294 is modified to N6-succinyllysine; alternate. N6-acetyllysine is present on lysine 299. Lysine 333 is subject to N6-acetyllysine; alternate. Lysine 333 carries the post-translational modification N6-succinyllysine; alternate. 2 positions are modified to N6-acetyllysine: lysine 349 and lysine 362. Catalysis depends on cysteine 459, which acts as the Proton donor/acceptor.

It belongs to the thiolase-like superfamily. Thiolase family. As to quaternary structure, heterotetramer of 2 alpha/HADHA and 2 beta/HADHB subunits; forms the mitochondrial trifunctional enzyme. Also purified as higher order heterooligomers including a 4 alpha/HADHA and 4 beta/HADHB heterooligomer which physiological significance remains unclear. The mitochondrial trifunctional enzyme interacts with MTLN. Interacts with RSAD2/viperin. In terms of processing, acetylation of Lys-202 is observed in liver mitochondria from fasted mice but not from fed mice.

Its subcellular location is the mitochondrion. It localises to the mitochondrion inner membrane. The protein resides in the mitochondrion outer membrane. It is found in the endoplasmic reticulum. It carries out the reaction an acyl-CoA + acetyl-CoA = a 3-oxoacyl-CoA + CoA. The enzyme catalyses butanoyl-CoA + acetyl-CoA = 3-oxohexanoyl-CoA + CoA. It catalyses the reaction hexanoyl-CoA + acetyl-CoA = 3-oxooctanoyl-CoA + CoA. The catalysed reaction is octanoyl-CoA + acetyl-CoA = 3-oxodecanoyl-CoA + CoA. It carries out the reaction decanoyl-CoA + acetyl-CoA = 3-oxododecanoyl-CoA + CoA. The enzyme catalyses dodecanoyl-CoA + acetyl-CoA = 3-oxotetradecanoyl-CoA + CoA. It catalyses the reaction tetradecanoyl-CoA + acetyl-CoA = 3-oxohexadecanoyl-CoA + CoA. It participates in lipid metabolism; fatty acid beta-oxidation. In terms of biological role, mitochondrial trifunctional enzyme catalyzes the last three of the four reactions of the mitochondrial beta-oxidation pathway. The mitochondrial beta-oxidation pathway is the major energy-producing process in tissues and is performed through four consecutive reactions breaking down fatty acids into acetyl-CoA. Among the enzymes involved in this pathway, the trifunctional enzyme exhibits specificity for long-chain fatty acids. Mitochondrial trifunctional enzyme is a heterotetrameric complex composed of two proteins, the trifunctional enzyme subunit alpha/HADHA carries the 2,3-enoyl-CoA hydratase and the 3-hydroxyacyl-CoA dehydrogenase activities, while the trifunctional enzyme subunit beta/HADHB described here bears the 3-ketoacyl-CoA thiolase activity. The protein is Trifunctional enzyme subunit beta, mitochondrial (Hadhb) of Mus musculus (Mouse).